Consider the following 501-residue polypeptide: Aluminum-activated malate transporter 2 (501 aa).

6 helical membrane passes run 22-42, 52-72, 78-98, 101-121, 130-150, and 166-186; these read VVHA…YYYQ, AMWA…ATLG, AVAT…ASLS, TVEP…STFV, RYDY…VSGF, and VIMG…VWAG. The tract at residues 398-425 is disordered; it reads FKNKKKPSKSNSGSIGQAMPNKSHDDDD.

The protein belongs to the aromatic acid exporter (TC 2.A.85) family.

It is found in the membrane. Functionally, malate transporter. In Arabidopsis thaliana (Mouse-ear cress), this protein is Aluminum-activated malate transporter 2 (ALMT2).